The following is a 183-amino-acid chain: Capsid protein (183 aa).

The disordered stretch occupies residues 143–183 (LPETTVIRRRGRSPRRRTPSPRRRRSQSPRRRRSQSREPQC). Residues 149-176 (IRRRGRSPRRRTPSPRRRRSQSPRRRRS) show a composition bias toward basic residues. A phosphoserine; by host mark is found at Ser155, Ser162, and Ser170. One copy of the 1; half-length repeat lies at 155 to 161 (SPRRRTP). The segment at 155–177 (SPRRRTPSPRRRRSQSPRRRRSQ) is 3 X 8 AA repeats of S-P-R-R-R-[PR]-S-Q. The short motif at 158 to 175 (RRTPSPRRRRSQSPRRRR) is the Bipartite nuclear localization signal element. 2 consecutive repeat copies span residues 162 to 169 (SPRRRRSQ) and 170 to 177 (SPRRRRSQ). The RNA binding stretch occupies residues 177-183 (QSREPQC).

It belongs to the orthohepadnavirus core antigen family. In terms of assembly, homodimerizes, then multimerizes. Interacts with cytosol exposed regions of viral L glycoprotein present in the reticulum-to-Golgi compartment. Interacts with human FLNB. Phosphorylated form interacts with host importin alpha; this interaction depends on the exposure of the NLS, which itself depends upon genome maturation and/or phosphorylation of the capsid protein. Interacts with host NUP153. In terms of processing, phosphorylated by host SRPK1, SRPK2, and maybe protein kinase C or GAPDH. Phosphorylation is critical for pregenomic RNA packaging. Protein kinase C phosphorylation is stimulated by HBx protein and may play a role in transport of the viral genome to the nucleus at the late step during the viral replication cycle.

It localises to the virion. Its subcellular location is the host cytoplasm. Its function is as follows. Self assembles to form an icosahedral capsid. Most capsids appear to be large particles with an icosahedral symmetry of T=4 and consist of 240 copies of capsid protein, though a fraction forms smaller T=3 particles consisting of 180 capsid proteins. Entering capsids are transported along microtubules to the nucleus. Phosphorylation of the capsid is thought to induce exposure of nuclear localization signal in the C-terminal portion of the capsid protein that allows binding to the nuclear pore complex via the importin (karyopherin-) alpha and beta. Capsids are imported in intact form through the nuclear pore into the nuclear basket, where it probably binds NUP153. Only capsids that contain the mature viral genome can release the viral DNA and capsid protein into the nucleoplasm. Immature capsids get stuck in the basket. Capsids encapsulate the pre-genomic RNA and the P protein. Pre-genomic RNA is reverse-transcribed into DNA while the capsid is still in the cytoplasm. The capsid can then either be directed to the nucleus, providing more genomes for transcription, or bud through the endoplasmic reticulum to provide new virions. This is Capsid protein from Hepatitis B virus genotype B1 (isolate Japan/Ry30/2002) (HBV-B).